The following is a 160-amino-acid chain: Phosphopantetheine adenylyltransferase (160 aa).

Substrate is bound at residue S11. Residues 11–12 (SF) and H19 each bind ATP. Residues K43, L75, and R89 each contribute to the substrate site. ATP contacts are provided by residues 90–92 (GLR), E100, and 125–131 (YSFISSS).

This sequence belongs to the bacterial CoaD family. Homohexamer. Mg(2+) is required as a cofactor.

The protein localises to the cytoplasm. It catalyses the reaction (R)-4'-phosphopantetheine + ATP + H(+) = 3'-dephospho-CoA + diphosphate. It participates in cofactor biosynthesis; coenzyme A biosynthesis; CoA from (R)-pantothenate: step 4/5. Functionally, reversibly transfers an adenylyl group from ATP to 4'-phosphopantetheine, yielding dephospho-CoA (dPCoA) and pyrophosphate. In Staphylococcus aureus (strain Mu3 / ATCC 700698), this protein is Phosphopantetheine adenylyltransferase.